Reading from the N-terminus, the 269-residue chain is tRNA (guanine-N(1)-)-methyltransferase (269 aa).

S-adenosyl-L-methionine contacts are provided by residues Gly115 and 139–144; that span reads LGDYVL.

The protein belongs to the RNA methyltransferase TrmD family. As to quaternary structure, homodimer.

Its subcellular location is the cytoplasm. The enzyme catalyses guanosine(37) in tRNA + S-adenosyl-L-methionine = N(1)-methylguanosine(37) in tRNA + S-adenosyl-L-homocysteine + H(+). Specifically methylates guanosine-37 in various tRNAs. The protein is tRNA (guanine-N(1)-)-methyltransferase of Pseudarthrobacter chlorophenolicus (strain ATCC 700700 / DSM 12829 / CIP 107037 / JCM 12360 / KCTC 9906 / NCIMB 13794 / A6) (Arthrobacter chlorophenolicus).